The chain runs to 341 residues: Holliday junction branch migration complex subunit RuvB (341 aa).

A large ATPase domain (RuvB-L) region spans residues 1–180 (MAKSHTLNPE…FGIQLRLDYY (180 aa)). 9 residues coordinate ATP: L19, R20, G61, K64, T65, T66, R170, Y180, and R217. T65 serves as a coordination point for Mg(2+). A small ATPAse domain (RuvB-S) region spans residues 181 to 251 (NDEEMKQIVL…LCLKAFEKMG (71 aa)). Positions 254–341 (DLGLDGMDRQ…VHHGQDPTLF (88 aa)) are head domain (RuvB-H). R309 and R314 together coordinate DNA.

It belongs to the RuvB family. As to quaternary structure, homohexamer. Forms an RuvA(8)-RuvB(12)-Holliday junction (HJ) complex. HJ DNA is sandwiched between 2 RuvA tetramers; dsDNA enters through RuvA and exits via RuvB. An RuvB hexamer assembles on each DNA strand where it exits the tetramer. Each RuvB hexamer is contacted by two RuvA subunits (via domain III) on 2 adjacent RuvB subunits; this complex drives branch migration. In the full resolvosome a probable DNA-RuvA(4)-RuvB(12)-RuvC(2) complex forms which resolves the HJ.

Its subcellular location is the cytoplasm. It carries out the reaction ATP + H2O = ADP + phosphate + H(+). In terms of biological role, the RuvA-RuvB-RuvC complex processes Holliday junction (HJ) DNA during genetic recombination and DNA repair, while the RuvA-RuvB complex plays an important role in the rescue of blocked DNA replication forks via replication fork reversal (RFR). RuvA specifically binds to HJ cruciform DNA, conferring on it an open structure. The RuvB hexamer acts as an ATP-dependent pump, pulling dsDNA into and through the RuvAB complex. RuvB forms 2 homohexamers on either side of HJ DNA bound by 1 or 2 RuvA tetramers; 4 subunits per hexamer contact DNA at a time. Coordinated motions by a converter formed by DNA-disengaged RuvB subunits stimulates ATP hydrolysis and nucleotide exchange. Immobilization of the converter enables RuvB to convert the ATP-contained energy into a lever motion, pulling 2 nucleotides of DNA out of the RuvA tetramer per ATP hydrolyzed, thus driving DNA branch migration. The RuvB motors rotate together with the DNA substrate, which together with the progressing nucleotide cycle form the mechanistic basis for DNA recombination by continuous HJ branch migration. Branch migration allows RuvC to scan DNA until it finds its consensus sequence, where it cleaves and resolves cruciform DNA. The sequence is that of Holliday junction branch migration complex subunit RuvB from Leptospira interrogans serogroup Icterohaemorrhagiae serovar copenhageni (strain Fiocruz L1-130).